The following is a 286-amino-acid chain: Probable ketoamine kinase EAE_16955 (286 aa).

92–94 (EYL) contributes to the ATP binding site. The active-site Proton acceptor is the D194.

The protein belongs to the fructosamine kinase family.

Functionally, ketoamine kinase that phosphorylates ketoamines on the third carbon of the sugar moiety to generate ketoamine 3-phosphate. The protein is Probable ketoamine kinase EAE_16955 of Klebsiella aerogenes (strain ATCC 13048 / DSM 30053 / CCUG 1429 / JCM 1235 / KCTC 2190 / NBRC 13534 / NCIMB 10102 / NCTC 10006 / CDC 819-56) (Enterobacter aerogenes).